The following is a 165-amino-acid chain: Putative pre-16S rRNA nuclease (165 aa).

Belongs to the YqgF nuclease family.

It is found in the cytoplasm. Could be a nuclease involved in processing of the 5'-end of pre-16S rRNA. The sequence is that of Putative pre-16S rRNA nuclease from Rhizobium meliloti (strain 1021) (Ensifer meliloti).